The following is a 110-amino-acid chain: FMRFamide-like neuropeptides 11 (110 aa).

Residues M1 to S22 form the signal peptide. Positions Y23–E29 are excised as a propeptide. 2 positions are modified to phenylalanine amide: F40 and F54. The segment at L60–F85 is disordered. A Glutamine amide modification is found at Q72. F85 carries the post-translational modification Phenylalanine amide. The propeptide occupies S88–K110.

This sequence belongs to the FARP (FMRFamide related peptide) family. Each flp gene is expressed in a distinct set of neurons. Flp-11 is expressed in the DD, VD and DVB motor neurons, the PVC and URX interneurons, and the AUA, BAG, DA, LUA, and SAB neurons. Also expressed in head muscle, socket or sheath cells and uterine cells. Expressed exclusively in PHC sensory neurons in males. Expressed in AVK and RIS interneurons.

The protein localises to the secreted. Its function is as follows. FMRFamides and FMRFamide-like peptides are neuropeptides. Induces sleep-like quiescence behavior following release from RIS interneuron. Helps to sustain locomotion stop after gamma-aminobutyric acid (GABA) induces fast slowing response. Inhibits the late-stage body bend swimming frequency in animals through several receptors including frpr-3, npr-4 and npr-22. Potent inhibitor of the activity of the dissected pharyngeal myogenic muscle system. Acts as a ligand for the npr-22 receptor in vitro. In terms of biological role, acts as a ligand for the npr-22 receptor in vitro. The sequence is that of FMRFamide-like neuropeptides 11 from Caenorhabditis elegans.